We begin with the raw amino-acid sequence, 510 residues long: Cytochrome P450 monooxygenase BOT1 (510 aa).

The helical transmembrane segment at 16 to 36 (PLAWAALILASFTLYSVQLVV) threads the bilayer. Cysteine 454 lines the heme pocket. Residue asparagine 476 is glycosylated (N-linked (GlcNAc...) asparagine).

This sequence belongs to the cytochrome P450 family. It depends on heme as a cofactor.

The protein resides in the membrane. The protein operates within secondary metabolite biosynthesis. Functionally, cytochrome P450 monooxygenase; part of the gene cluster that mediates the biosynthesis of botrydial. Botrydial is necessary for colonization of plant tissue by the T4 strain. It is a strain-dependent virulence factor since highly aggressive strains like SAS56 or B05 still retain substantial virulence when botrydial synthesis is impaired, since they produce also botcinic acid. The first step of botrydial biosynthesis is performed by the sesquiterpene synthase BOT2 which catalyzes the cyclization of farnesyl diphosphate (FPP) to presilphiperfolan-8-beta-ol (PSP). The cytochrome P450 monooxygenase BOT4 then catalyzes the hydroxylation at C-4 to give a probotryane intermediate. Acetylation of the hydroxyl at C-4 is carried out by the acetyltransferase BOT5, followed by the combined action of the P450 monooxygenases BOT3 and BOT1, to yield finally the glycol, via the regio- and stereospecific hydroxylations at C-10 and C-15 of the probotryane intermediates, respectively. The cleavage of the C10-C15 bond of probotryane skeleton is an intriguing and chemically important reaction, which could be mediated by some of the monooxygenases or by a combination of them. It is possible that either BOT3 or BOT1 would oxidize either the 10- or the 15-hydroxy group to the hydroperoxide derivative, which would then undergo heterolytic fragmentation to give the dialdehyde botrydial. Finally, the dehydrogenase BOT7 might be involved in the conversion of botrydial to dihydrobotrydial. This is Cytochrome P450 monooxygenase BOT1 from Botryotinia fuckeliana (Noble rot fungus).